The primary structure comprises 366 residues: Endogenous Bornavirus-like nucleoprotein 1 (366 aa).

Positions 1–15 are enriched in polar residues; it reads MSRPRNNPQTSSPQD. Positions 1 to 22 are disordered; the sequence is MSRPRNNPQTSSPQDSTKDGSS.

As to expression, expression detected by RT-PCR in a few cell lines, including OL, HEK293T and MOLT-4. Not observed in HeLa cells.

In terms of biological role, may act as an RNA-binding protein. Highly homologous to the bornavirus nucleocapsid N protein that binds viral RNA and oligomerizes. The polypeptide is Endogenous Bornavirus-like nucleoprotein 1 (EBLN1) (Homo sapiens (Human)).